The primary structure comprises 267 residues: Putative carbamate hydrolase RutD (267 aa).

Positions 14-115 (PTLVLSAGLG…EKLVVVNGWP (102 aa)) constitute an AB hydrolase-1 domain.

The protein belongs to the AB hydrolase superfamily. Hydrolase RutD family.

It carries out the reaction carbamate + 2 H(+) = NH4(+) + CO2. In terms of biological role, involved in pyrimidine catabolism. May facilitate the hydrolysis of carbamate, a reaction that can also occur spontaneously. This Serratia proteamaculans (strain 568) protein is Putative carbamate hydrolase RutD.